A 455-amino-acid chain; its full sequence is tRNA modification GTPase MnmE (455 aa).

(6S)-5-formyl-5,6,7,8-tetrahydrofolate-binding residues include R24, E81, and K120. Residues 216 to 378 (GMTVVIAGRP…LREHLKACMG (163 aa)) enclose the TrmE-type G domain. N226 is a binding site for K(+). Residues 226 to 231 (NAGKSS), 245 to 251 (TDIAGTT), 270 to 273 (DTAG), and 335 to 338 (NKAD) each bind GTP. S230 contacts Mg(2+). 3 residues coordinate K(+): T245, I247, and T250. T251 serves as a coordination point for Mg(2+). Residue K455 coordinates (6S)-5-formyl-5,6,7,8-tetrahydrofolate.

It belongs to the TRAFAC class TrmE-Era-EngA-EngB-Septin-like GTPase superfamily. TrmE GTPase family. As to quaternary structure, homodimer. Heterotetramer of two MnmE and two MnmG subunits. It depends on K(+) as a cofactor.

The protein resides in the cytoplasm. Functionally, exhibits a very high intrinsic GTPase hydrolysis rate. Involved in the addition of a carboxymethylaminomethyl (cmnm) group at the wobble position (U34) of certain tRNAs, forming tRNA-cmnm(5)s(2)U34. This chain is tRNA modification GTPase MnmE, found in Ectopseudomonas mendocina (strain ymp) (Pseudomonas mendocina).